Reading from the N-terminus, the 212-residue chain is uncharacterized protein (212 aa).

It belongs to the IIV-6 309L family.

This is an uncharacterized protein from Aedes vexans (Inland floodwater mosquito).